Here is a 164-residue protein sequence, read N- to C-terminus: Sorting nexin-3 (164 aa).

The disordered stretch occupies residues 1–26; sequence MSGKREFKSFGSTEETMFSQHHKIPS. Over residues 10–26 the composition is skewed to polar residues; sequence FGSTEETMFSQHHKIPS. The PX domain maps to 40-163; the sequence is IEVRNPKTHV…IRFIEDDKFV (124 aa). A 1,2-diacyl-sn-glycero-3-phospho-(1D-myo-inositol-3-phosphate) is bound by residues Arg83, Ser85, Lys114, Arg120, and Arg129.

Belongs to the sorting nexin family.

It localises to the cytoplasm. The protein resides in the golgi apparatus membrane. Its subcellular location is the prevacuolar compartment membrane. Functionally, required for retention of late Golgi membrane proteins. Component of the retrieval machinery that functions by direct interaction with the cytosolic tails of certain TGN membrane proteins during the sorting/budding process at the prevacuolar compartment. Binds phosphatidylinositol 3-phosphate (PtdIns(P3)). The sequence is that of Sorting nexin-3 (SNX3) from Candida glabrata (strain ATCC 2001 / BCRC 20586 / JCM 3761 / NBRC 0622 / NRRL Y-65 / CBS 138) (Yeast).